The sequence spans 210 residues: UPF0173 protein PYRAB01190 (210 aa).

The protein belongs to the UPF0173 family.

This Pyrococcus abyssi (strain GE5 / Orsay) protein is UPF0173 protein PYRAB01190.